A 188-amino-acid chain; its full sequence is Probable DNA-directed RNA polymerase subunit delta (188 aa).

In terms of domain architecture, HTH HARE-type spans 14 to 83; it reads LSMIEVARAI…GENKWGLRSW (70 aa). Residues 119–188 are disordered; that stretch reads EDAIDYSADD…EDEEDEDEEE (70 aa).

This sequence belongs to the RpoE family. As to quaternary structure, RNAP is composed of a core of 2 alpha, a beta and a beta' subunits. The core is associated with a delta subunit and one of several sigma factors.

In terms of biological role, participates in both the initiation and recycling phases of transcription. In the presence of the delta subunit, RNAP displays an increased specificity of transcription, a decreased affinity for nucleic acids, and an increased efficiency of RNA synthesis because of enhanced recycling. In Streptococcus equi subsp. zooepidemicus (strain H70), this protein is Probable DNA-directed RNA polymerase subunit delta.